We begin with the raw amino-acid sequence, 459 residues long: Cysteine--tRNA ligase (459 aa).

Residue Cys-31 participates in Zn(2+) binding. Residues 33-43 carry the 'HIGH' region motif; the sequence is PTVYDNPHIGN. Positions 216, 241, and 245 each coordinate Zn(2+). Residues 274-278 carry the 'KMSKS' region motif; the sequence is KMSKS. Lys-277 is a binding site for ATP.

Belongs to the class-I aminoacyl-tRNA synthetase family. As to quaternary structure, monomer. Requires Zn(2+) as cofactor.

It localises to the cytoplasm. The catalysed reaction is tRNA(Cys) + L-cysteine + ATP = L-cysteinyl-tRNA(Cys) + AMP + diphosphate. In Rickettsia massiliae (strain Mtu5), this protein is Cysteine--tRNA ligase.